A 400-amino-acid chain; its full sequence is Elongation factor Tu (400 aa).

One can recognise a tr-type G domain in the interval 10–209 (KPHINIGTIG…AVDDYIPTPE (200 aa)). Residues 19–26 (GHVDHGKT) form a G1 region. 19–26 (GHVDHGKT) is a binding site for GTP. A Mg(2+)-binding site is contributed by threonine 26. Residues 60-64 (GITIS) form a G2 region. A G3 region spans residues 81–84 (DCPG). GTP contacts are provided by residues 81–85 (DCPGH) and 136–139 (NKVD). Residues 136–139 (NKVD) form a G4 region. The interval 174-176 (SAK) is G5.

It belongs to the TRAFAC class translation factor GTPase superfamily. Classic translation factor GTPase family. EF-Tu/EF-1A subfamily. As to quaternary structure, monomer.

It is found in the cytoplasm. It catalyses the reaction GTP + H2O = GDP + phosphate + H(+). GTP hydrolase that promotes the GTP-dependent binding of aminoacyl-tRNA to the A-site of ribosomes during protein biosynthesis. The protein is Elongation factor Tu of Herpetosiphon aurantiacus (Herpetosiphon giganteus).